Reading from the N-terminus, the 894-residue chain is Protein translocase subunit SecA (894 aa).

Residues Q87, 105-109, and D512 contribute to the ATP site; that span reads GEGKT. The disordered stretch occupies residues 857–894; it reads FNLGDEPEAQQPVTSKKVGRNEPCPCGSGKKYKQCCGK. The Zn(2+) site is built by C880, C882, C891, and C892.

This sequence belongs to the SecA family. Monomer and homodimer. Part of the essential Sec protein translocation apparatus which comprises SecA, SecYEG and auxiliary proteins SecDF-YajC and YidC. Zn(2+) serves as cofactor.

It localises to the cell inner membrane. The protein resides in the cytoplasm. The catalysed reaction is ATP + H2O + cellular proteinSide 1 = ADP + phosphate + cellular proteinSide 2.. Its function is as follows. Part of the Sec protein translocase complex. Interacts with the SecYEG preprotein conducting channel. Has a central role in coupling the hydrolysis of ATP to the transfer of proteins into and across the cell membrane, serving as an ATP-driven molecular motor driving the stepwise translocation of polypeptide chains across the membrane. The polypeptide is Protein translocase subunit SecA (Geotalea uraniireducens (strain Rf4) (Geobacter uraniireducens)).